The following is a 294-amino-acid chain: Large ribosomal subunit protein uL2 (294 aa).

Disordered stretches follow at residues 1–37 (MGIRTFRPYTPSTRHMTVSNFEELSRDENGKRPRPEK) and 228–294 (GSVM…RAAQ). Positions 10-22 (TPSTRHMTVSNFE) are enriched in polar residues. Positions 23 to 37 (ELSRDENGKRPRPEK) are enriched in basic and acidic residues. A compositionally biased stretch (basic residues) spans 264 to 285 (KTRKRNKPSNKFIVRGRRRGGR).

It belongs to the universal ribosomal protein uL2 family. Part of the 50S ribosomal subunit. Forms a bridge to the 30S subunit in the 70S ribosome.

Functionally, one of the primary rRNA binding proteins. Required for association of the 30S and 50S subunits to form the 70S ribosome, for tRNA binding and peptide bond formation. It has been suggested to have peptidyltransferase activity; this is somewhat controversial. Makes several contacts with the 16S rRNA in the 70S ribosome. The protein is Large ribosomal subunit protein uL2 of Synechococcus sp. (strain JA-3-3Ab) (Cyanobacteria bacterium Yellowstone A-Prime).